Consider the following 416-residue polypeptide: Choline/ethanolaminephosphotransferase 1 (416 aa).

A disordered region spans residues 1-20; sequence MSGHRSTRKRCGDSHPESPV. A Phosphoserine modification is found at S18. Phosphothreonine is present on T40. N86 lines the CDP-choline pocket. 2 helical membrane-spanning segments follow: residues 89–108 and 116–133; these read TIIG…FYCP and LWAY…QSLD. D133 contributes to the Mg(2+) binding site. N144 carries N-linked (GlcNAc...) asparagine glycosylation. E151 contributes to the CDP-choline binding site. Residue D154 coordinates Mg(2+). H155 functions as the Proton acceptor in the catalytic mechanism. The next 8 helical transmembrane spans lie at 156–176, 180–199, 210–230, 246–267, 286–306, 315–334, 349–363, and 368–388; these read GCDS…VQLG, DWMF…AHWQ, IIDV…AVIG, MKIF…NYFR, VLSP…IYKK, HPCL…TNKL, TAFI…DQYF, and DEYI…IRYC. Residue D158 participates in Mg(2+) binding.

This sequence belongs to the CDP-alcohol phosphatidyltransferase class-I family. In terms of assembly, homodimer. The cofactor is Mg(2+). Mn(2+) is required as a cofactor. In terms of tissue distribution, ubiquitously expressed.

Its subcellular location is the endoplasmic reticulum membrane. The protein resides in the nucleus membrane. It catalyses the reaction CDP-ethanolamine + a 1,2-diacyl-sn-glycerol = a 1,2-diacyl-sn-glycero-3-phosphoethanolamine + CMP + H(+). The enzyme catalyses CDP-choline + a 1,2-diacyl-sn-glycerol = a 1,2-diacyl-sn-glycero-3-phosphocholine + CMP + H(+). It carries out the reaction 1-O-alkyl-2-acyl-sn-glycerol + CDP-choline = a 1-O-alkyl-2-acyl-sn-glycero-3-phosphocholine + CMP + H(+). The catalysed reaction is a 1-O-(1Z-alkenyl)-2-acyl-sn-glycerol + CDP-choline = a 1-O-(1Z-alkenyl)-2-acyl-sn-glycero-3-phosphocholine + CMP + H(+). It catalyses the reaction 1,2-dioctanoyl-sn-glycerol + CDP-choline = 1,2-dioctanoyl-sn-glycero-3-phosphocholine + CMP + H(+). The enzyme catalyses 1,2-didecanoyl-sn-glycerol + CDP-choline = 1,2-didecanoyl-sn-glycero-3-phosphocholine + CMP + H(+). It carries out the reaction CDP-choline + 1,2-di-(9Z-octadecenoyl)-sn-glycerol = 1,2-di-(9Z-octadecenoyl)-sn-glycero-3-phosphocholine + CMP + H(+). The catalysed reaction is 1-hexadecanoyl-2-(9Z-octadecenoyl)-sn-glycerol + CDP-choline = 1-hexadecanoyl-2-(9Z-octadecenoyl)-sn-glycero-3-phosphocholine + CMP + H(+). It catalyses the reaction CDP-ethanolamine + 1,2-di-(9Z-octadecenoyl)-sn-glycerol = 1,2-di-(9Z-octadecenoyl)-sn-glycero-3-phosphoethanolamine + CMP + H(+). The enzyme catalyses 1-hexadecanoyl-2-(9Z-octadecenoyl)-sn-glycerol + CDP-ethanolamine = 1-hexadecanoyl-2-(9Z-octadecenoyl)-sn-glycero-3-phosphoethanolamine + CMP + H(+). It carries out the reaction 1-hexadecanoyl-2-(4Z,7Z,10Z,13Z,16Z,19Z-docosahexaenoyl)-sn-glycerol + CDP-choline = 1-hexadecanoyl-2-(4Z,7Z,10Z,13Z,16Z,19Z-docosahexaenoyl)-sn-glycero-3-phosphocholine + CMP + H(+). The catalysed reaction is 1,2-di-(9Z-hexadecenoyl)-sn-glycerol + CDP-choline = 1,2-di-(9Z-hexadecenoyl)-sn-glycero-3-phosphocholine + CMP + H(+). It catalyses the reaction 1,2-di-(9Z-hexadecenoyl)-sn-glycerol + CDP-ethanolamine = 1,2-di-(9Z-hexadecenoyl)-sn-glycero-3-phosphoethanolamine + CMP + H(+). The enzyme catalyses 1-O-hexadecyl-2-acetyl-sn-glycerol + CDP-choline = 1-O-hexadecyl-2-acetyl-sn-glycero-3-phosphocholine + CMP + H(+). It carries out the reaction 1-O-hexadecyl-2-(5Z,8Z,11Z,14Z-eicosatetraenoyl)-sn-glycerol + CDP-choline = 1-O-hexadecyl-2-(5Z,8Z,11Z,14Z)-eicosatetraenoyl-sn-glycero-3-phosphocholine + CMP + H(+). Its pathway is phospholipid metabolism; phosphatidylethanolamine biosynthesis; phosphatidylethanolamine from ethanolamine: step 3/3. The protein operates within phospholipid metabolism; phosphatidylcholine biosynthesis; phosphatidylcholine from phosphocholine: step 2/2. Functionally, catalyzes both phosphatidylcholine and phosphatidylethanolamine biosynthesis from CDP-choline and CDP-ethanolamine, respectively. Involved in protein-dependent process of phospholipid transport to distribute phosphatidyl choline to the lumenal surface. Has a higher cholinephosphotransferase activity than ethanolaminephosphotransferase activity. This chain is Choline/ethanolaminephosphotransferase 1, found in Homo sapiens (Human).